The chain runs to 281 residues: DegV domain-containing protein spr0652 (281 aa).

The DegV domain occupies 3 to 280; the sequence is WKIIADSGCD…EGGLLMGYEI (278 aa). Hexadecanoate contacts are provided by Ser63 and Ser91.

In terms of biological role, may bind long-chain fatty acids, such as palmitate, and may play a role in lipid transport or fatty acid metabolism. In Streptococcus pneumoniae (strain ATCC BAA-255 / R6), this protein is DegV domain-containing protein spr0652.